The chain runs to 160 residues: Cytochrome c-type biogenesis protein CcmE (160 aa).

The Cytoplasmic portion of the chain corresponds to M1–R8. Residues L9–A29 form a helical; Signal-anchor for type II membrane protein membrane-spanning segment. Topologically, residues L30–Q160 are periplasmic. 2 residues coordinate heme: H128 and Y132.

This sequence belongs to the CcmE/CycJ family.

Its subcellular location is the cell inner membrane. Heme chaperone required for the biogenesis of c-type cytochromes. Transiently binds heme delivered by CcmC and transfers the heme to apo-cytochromes in a process facilitated by CcmF and CcmH. The protein is Cytochrome c-type biogenesis protein CcmE of Vibrio atlanticus (strain LGP32) (Vibrio splendidus (strain Mel32)).